The chain runs to 443 residues: Threonine/serine transporter TdcC (443 aa).

The next 11 membrane-spanning stretches (helical) occupy residues 22–42, 44–64, 97–117, 135–155, 163–183, 207–227, 259–279, 319–339, 366–386, 389–409, and 422–442; these read TTWTLGLFGTAIGAGVLFFPI, AGFGGLIPILVMLVLAYPIAF, GVVITFLYFFAICPLLWIYGV, ALNRGFVALFLLLLMAVIIWF, VMSFLVWPFIASLVLISLSLI, ILVTVWLGISIMVFSFNFSPI, ASILMVAVVMFFAFSCLFALS, ASIIALVAIFKSFFGHYLGTL, LSMVFIMGSTWLVAYVNPNIL, IEAMGAPIIASLLCLLPMYAI, and IDNVFVTAIGLLTISNIVYKV.

It belongs to the amino acid/polyamine transporter 2 family. SdaC/TdcC subfamily.

The protein localises to the cell inner membrane. It catalyses the reaction L-threonine(in) + H(+)(in) = L-threonine(out) + H(+)(out). The catalysed reaction is L-serine(in) + H(+)(in) = L-serine(out) + H(+)(out). Its function is as follows. Involved in the import of threonine and serine into the cell, with the concomitant import of a proton (symport system). This Escherichia fergusonii (strain ATCC 35469 / DSM 13698 / CCUG 18766 / IAM 14443 / JCM 21226 / LMG 7866 / NBRC 102419 / NCTC 12128 / CDC 0568-73) protein is Threonine/serine transporter TdcC.